We begin with the raw amino-acid sequence, 243 residues long: Leucyl/phenylalanyl-tRNA--protein transferase (243 aa).

Belongs to the L/F-transferase family.

Its subcellular location is the cytoplasm. The catalysed reaction is N-terminal L-lysyl-[protein] + L-leucyl-tRNA(Leu) = N-terminal L-leucyl-L-lysyl-[protein] + tRNA(Leu) + H(+). The enzyme catalyses N-terminal L-arginyl-[protein] + L-leucyl-tRNA(Leu) = N-terminal L-leucyl-L-arginyl-[protein] + tRNA(Leu) + H(+). It carries out the reaction L-phenylalanyl-tRNA(Phe) + an N-terminal L-alpha-aminoacyl-[protein] = an N-terminal L-phenylalanyl-L-alpha-aminoacyl-[protein] + tRNA(Phe). Its function is as follows. Functions in the N-end rule pathway of protein degradation where it conjugates Leu, Phe and, less efficiently, Met from aminoacyl-tRNAs to the N-termini of proteins containing an N-terminal arginine or lysine. This is Leucyl/phenylalanyl-tRNA--protein transferase from Vibrio cholerae serotype O1 (strain ATCC 39541 / Classical Ogawa 395 / O395).